The primary structure comprises 30 residues: L-serine dehydratase, alpha chain (30 aa).

The protein belongs to the iron-sulfur dependent L-serine dehydratase family. As to quaternary structure, heterodimer of an alpha chain and a beta chain. [4Fe-4S] cluster serves as cofactor.

The catalysed reaction is L-serine = pyruvate + NH4(+). It functions in the pathway carbohydrate biosynthesis; gluconeogenesis. In Anaerotignum propionicum (Clostridium propionicum), this protein is L-serine dehydratase, alpha chain.